Here is a 563-residue protein sequence, read N- to C-terminus: Membrane protein insertase YidC (563 aa).

A helical transmembrane segment spans residues 1–21 (MDIKRTILIVALAIVTYVGVL). The disordered stretch occupies residues 43-62 (APGIPDTAAGTNGSASADVP). The next 5 helical transmembrane spans lie at 344–364 (LELT…FWLL), 370–390 (ILGN…GLFF), 440–460 (LGGC…YWVL), 471–491 (WILW…PIIM), and 518–538 (PIIF…YWVV).

Belongs to the OXA1/ALB3/YidC family. Type 1 subfamily. Interacts with the Sec translocase complex via SecD. Specifically interacts with transmembrane segments of nascent integral membrane proteins during membrane integration.

It localises to the cell inner membrane. Functionally, required for the insertion and/or proper folding and/or complex formation of integral membrane proteins into the membrane. Involved in integration of membrane proteins that insert both dependently and independently of the Sec translocase complex, as well as at least some lipoproteins. Aids folding of multispanning membrane proteins. The polypeptide is Membrane protein insertase YidC (Pseudomonas syringae pv. syringae (strain B728a)).